A 109-amino-acid polypeptide reads, in one-letter code: Cyclic di-AMP receptor A (109 aa).

3',3'-c-di-AMP is bound by residues T21, F25, T28, G35, F36, L37, N41, G47, E92, and G94.

Homotrimer.

It is found in the cytoplasm. In terms of biological role, binds cyclic di-AMP (c-di-AMP) and is probably involved in c-di-AMP-mediated signaling pathways. In vitro, can also bind cyclic GMP-AMP (3'3'-cGAMP), with lower affinity, but not c-di-GMP or 2'3'-cGAMP. This chain is Cyclic di-AMP receptor A, found in Bacillus subtilis (strain 168).